The primary structure comprises 430 residues: Adenylosuccinate synthetase (430 aa).

GTP-binding positions include 12–18 (GDEGKGK) and 40–42 (GHT). Residue Asp13 is the Proton acceptor of the active site. Positions 13 and 40 each coordinate Mg(2+). IMP-binding positions include 13-16 (DEGK), 38-41 (NAGH), Thr130, Arg144, Gln224, Thr239, and Arg303. His41 (proton donor) is an active-site residue. Substrate is bound at residue 299-305 (TNTGRPR). GTP contacts are provided by residues Arg305, 331–333 (KLD), and 413–415 (STS).

The protein belongs to the adenylosuccinate synthetase family. In terms of assembly, homodimer. Requires Mg(2+) as cofactor.

It localises to the cytoplasm. The enzyme catalyses IMP + L-aspartate + GTP = N(6)-(1,2-dicarboxyethyl)-AMP + GDP + phosphate + 2 H(+). It functions in the pathway purine metabolism; AMP biosynthesis via de novo pathway; AMP from IMP: step 1/2. Its function is as follows. Plays an important role in the de novo pathway of purine nucleotide biosynthesis. Catalyzes the first committed step in the biosynthesis of AMP from IMP. The polypeptide is Adenylosuccinate synthetase (Rhodopseudomonas palustris (strain BisB5)).